The sequence spans 291 residues: Putative transport permease ycf38 (291 aa).

A run of 6 helical transmembrane segments spans residues 47–67 (ATLMAGIIQPLLWLVLFGGLF), 87–107 (SGIIVFTSFTGALNSGLPLMF), 135–155 (FMTCLSLIQVIFIVIASLFMG), 165–185 (LIFALIVLLVTVGVTMLSLAL), 195–215 (LLALILVVNLPFLFSSTALAP), and 262–282 (ISLGQIISLLLFLDVIGAYIV). Positions 47-289 (ATLMAGIIQP…YIVSNILKAR (243 aa)) constitute an ABC transmembrane type-2 domain.

Belongs to the ABC-2 integral membrane protein family.

Its subcellular location is the plastid. The protein resides in the chloroplast membrane. This chain is Putative transport permease ycf38 (ycf38), found in Porphyra purpurea (Red seaweed).